The primary structure comprises 330 residues: DNA-directed RNA polymerase subunit alpha (330 aa).

The interval methionine 1 to lysine 232 is alpha N-terminal domain (alpha-NTD). An alpha C-terminal domain (alpha-CTD) region spans residues glutamate 248–glutamate 330.

Belongs to the RNA polymerase alpha chain family. Homodimer. The RNAP catalytic core consists of 2 alpha, 1 beta, 1 beta' and 1 omega subunit. When a sigma factor is associated with the core the holoenzyme is formed, which can initiate transcription.

The enzyme catalyses RNA(n) + a ribonucleoside 5'-triphosphate = RNA(n+1) + diphosphate. Functionally, DNA-dependent RNA polymerase catalyzes the transcription of DNA into RNA using the four ribonucleoside triphosphates as substrates. In Bacteroides thetaiotaomicron (strain ATCC 29148 / DSM 2079 / JCM 5827 / CCUG 10774 / NCTC 10582 / VPI-5482 / E50), this protein is DNA-directed RNA polymerase subunit alpha.